Here is a 225-residue protein sequence, read N- to C-terminus: Uridylate kinase (225 aa).

Residue 9 to 10 participates in ATP binding; sequence GS. Residue Gly-43 coordinates UMP. ATP is bound by residues Gly-44 and Arg-48. Residues Asp-65 and 113 to 119 contribute to the UMP site; that span reads TEPAHST. Residues Thr-139, Tyr-145, and Asp-148 each contribute to the ATP site.

It belongs to the UMP kinase family. In terms of assembly, homohexamer.

It localises to the cytoplasm. It carries out the reaction UMP + ATP = UDP + ADP. It functions in the pathway pyrimidine metabolism; CTP biosynthesis via de novo pathway; UDP from UMP (UMPK route): step 1/1. With respect to regulation, inhibited by UTP. In terms of biological role, catalyzes the reversible phosphorylation of UMP to UDP. The sequence is that of Uridylate kinase from Methanobrevibacter smithii (strain ATCC 35061 / DSM 861 / OCM 144 / PS).